A 429-amino-acid polypeptide reads, in one-letter code: Enolase 1 (429 aa).

Residue Gln163 participates in (2R)-2-phosphoglycerate binding. The Proton donor role is filled by Glu205. Residues Asp242, Glu287, and Asp314 each contribute to the Mg(2+) site. Lys339, Arg368, Ser369, and Lys390 together coordinate (2R)-2-phosphoglycerate. Lys339 functions as the Proton acceptor in the catalytic mechanism.

It belongs to the enolase family. It depends on Mg(2+) as a cofactor.

The protein resides in the cytoplasm. It is found in the secreted. It localises to the cell surface. The catalysed reaction is (2R)-2-phosphoglycerate = phosphoenolpyruvate + H2O. It functions in the pathway carbohydrate degradation; glycolysis; pyruvate from D-glyceraldehyde 3-phosphate: step 4/5. Catalyzes the reversible conversion of 2-phosphoglycerate (2-PG) into phosphoenolpyruvate (PEP). It is essential for the degradation of carbohydrates via glycolysis. This is Enolase 1 from Cupriavidus metallidurans (strain ATCC 43123 / DSM 2839 / NBRC 102507 / CH34) (Ralstonia metallidurans).